The chain runs to 131 residues: Global transcriptional regulator Spx (131 aa).

Cys-10 and Cys-13 are disulfide-bonded.

This sequence belongs to the ArsC family. Spx subfamily. In terms of assembly, interacts with the C-terminal domain of the alpha subunit of the RNAP.

Its subcellular location is the cytoplasm. Its function is as follows. Global transcriptional regulator that plays a key role in stress response and exerts either positive or negative regulation of genes. Acts by interacting with the C-terminal domain of the alpha subunit of the RNA polymerase (RNAP). This interaction can enhance binding of RNAP to the promoter region of target genes and stimulate their transcription, or block interaction of RNAP with activator. This chain is Global transcriptional regulator Spx, found in Staphylococcus epidermidis (strain ATCC 35984 / DSM 28319 / BCRC 17069 / CCUG 31568 / BM 3577 / RP62A).